A 146-amino-acid chain; its full sequence is Small ribosomal subunit protein uS5 (146 aa).

An S5 DRBM domain is found at 8–71 (FEESIVNIGR…DNAFKNLSKV (64 aa)).

The protein belongs to the universal ribosomal protein uS5 family. In terms of assembly, part of the 30S ribosomal subunit. Contacts proteins S4 and S8.

In terms of biological role, with S4 and S12 plays an important role in translational accuracy. Its function is as follows. Located at the back of the 30S subunit body where it stabilizes the conformation of the head with respect to the body. This is Small ribosomal subunit protein uS5 from Sulfurimonas denitrificans (strain ATCC 33889 / DSM 1251) (Thiomicrospira denitrificans (strain ATCC 33889 / DSM 1251)).